A 169-amino-acid chain; its full sequence is Protein AIG2 B (169 aa).

Residue 15–20 (YGSFQE) coordinates substrate. The active-site Proton acceptor is the E83.

It belongs to the gamma-glutamylcyclotransferase family. Expressed in roots, leaves and stems.

Its function is as follows. Putative gamma-glutamylcyclotransferase. In Arabidopsis thaliana (Mouse-ear cress), this protein is Protein AIG2 B.